The sequence spans 219 residues: 2-hydroxy-3-keto-5-methylthiopentenyl-1-phosphate phosphatase (219 aa).

This sequence belongs to the HAD-like hydrolase superfamily. MtnX family.

It catalyses the reaction 2-hydroxy-5-methylsulfanyl-3-oxopent-1-enyl phosphate + H2O = 1,2-dihydroxy-5-(methylsulfanyl)pent-1-en-3-one + phosphate. Its pathway is amino-acid biosynthesis; L-methionine biosynthesis via salvage pathway; L-methionine from S-methyl-5-thio-alpha-D-ribose 1-phosphate: step 4/6. Its function is as follows. Dephosphorylates 2-hydroxy-3-keto-5-methylthiopentenyl-1-phosphate (HK-MTPenyl-1-P) yielding 1,2-dihydroxy-3-keto-5-methylthiopentene (DHK-MTPene). The sequence is that of 2-hydroxy-3-keto-5-methylthiopentenyl-1-phosphate phosphatase from Bacillus anthracis (strain A0248).